The chain runs to 406 residues: Succinylornithine transaminase (406 aa).

An N6-(pyridoxal phosphate)lysine modification is found at Lys252.

This sequence belongs to the class-III pyridoxal-phosphate-dependent aminotransferase family. AstC subfamily. It depends on pyridoxal 5'-phosphate as a cofactor.

The enzyme catalyses N(2)-succinyl-L-ornithine + 2-oxoglutarate = N-succinyl-L-glutamate 5-semialdehyde + L-glutamate. It functions in the pathway amino-acid degradation; L-arginine degradation via AST pathway; L-glutamate and succinate from L-arginine: step 3/5. Its function is as follows. Catalyzes the transamination of N(2)-succinylornithine and alpha-ketoglutarate into N(2)-succinylglutamate semialdehyde and glutamate. Can also act as an acetylornithine aminotransferase. The sequence is that of Succinylornithine transaminase from Escherichia coli O139:H28 (strain E24377A / ETEC).